A 340-amino-acid polypeptide reads, in one-letter code: Protein pelota homolog (340 aa).

Belongs to the eukaryotic release factor 1 family. Pelota subfamily. As to quaternary structure, monomer. A divalent metal cation serves as cofactor.

It is found in the cytoplasm. Functionally, may function in recognizing stalled ribosomes, interact with stem-loop structures in stalled mRNA molecules, and effect endonucleolytic cleavage of the mRNA. May play a role in the release non-functional ribosomes and degradation of damaged mRNAs. Has endoribonuclease activity. The polypeptide is Protein pelota homolog (Methanosphaerula palustris (strain ATCC BAA-1556 / DSM 19958 / E1-9c)).